The chain runs to 251 residues: Small ribosomal subunit protein uS3 (251 aa).

The region spanning Ile39–Ile109 is the KH type-2 domain. A compositionally biased stretch (basic and acidic residues) spans Glu221 to Pro239. A disordered region spans residues Glu221 to Ala251. Residues Arg240 to Ala251 show a composition bias toward basic residues.

This sequence belongs to the universal ribosomal protein uS3 family. Part of the 30S ribosomal subunit. Forms a tight complex with proteins S10 and S14.

Its function is as follows. Binds the lower part of the 30S subunit head. Binds mRNA in the 70S ribosome, positioning it for translation. In Chlorobium limicola (strain DSM 245 / NBRC 103803 / 6330), this protein is Small ribosomal subunit protein uS3.